Reading from the N-terminus, the 156-residue chain is Small ribosomal subunit protein uS7 (156 aa).

It belongs to the universal ribosomal protein uS7 family. Part of the 30S ribosomal subunit. Contacts proteins S9 and S11.

One of the primary rRNA binding proteins, it binds directly to 16S rRNA where it nucleates assembly of the head domain of the 30S subunit. Is located at the subunit interface close to the decoding center, probably blocks exit of the E-site tRNA. The chain is Small ribosomal subunit protein uS7 from Thermoanaerobacter sp. (strain X514).